Here is a 226-residue protein sequence, read N- to C-terminus: MEYKKLHSWKLIPEKAIELQKLLSKKLTFKPLSKEINLVAGVDLSFVKDYGLAVIVILDKNMELIKVYHHIEKITFPYIPGLLAFREGPIFLKAWKKVNHNVDVVFFDGHGISHPRSMGIASHMGLWIEQPTIGIAKKILFGNYVEPENKKFSFTYITYKNQKIGIVLRSRENVKPIFISPGNLITLDESLELTKQFITKYKLPEPTRLAHKYSQLLKKQFNEELQ.

Asp43 and Asp108 together coordinate Mg(2+).

The protein belongs to the endonuclease V family. Mg(2+) serves as cofactor.

Its subcellular location is the cytoplasm. The catalysed reaction is Endonucleolytic cleavage at apurinic or apyrimidinic sites to products with a 5'-phosphate.. DNA repair enzyme involved in the repair of deaminated bases. Selectively cleaves double-stranded DNA at the second phosphodiester bond 3' to a deoxyinosine leaving behind the intact lesion on the nicked DNA. This Thermosipho melanesiensis (strain DSM 12029 / CIP 104789 / BI429) protein is Endonuclease V.